A 153-amino-acid polypeptide reads, in one-letter code: Ribosomal RNA large subunit methyltransferase H (153 aa).

Positions 71 and 102 each coordinate S-adenosyl-L-methionine.

It belongs to the RNA methyltransferase RlmH family. As to quaternary structure, homodimer.

It is found in the cytoplasm. It carries out the reaction pseudouridine(1915) in 23S rRNA + S-adenosyl-L-methionine = N(3)-methylpseudouridine(1915) in 23S rRNA + S-adenosyl-L-homocysteine + H(+). Its function is as follows. Specifically methylates the pseudouridine at position 1915 (m3Psi1915) in 23S rRNA. This chain is Ribosomal RNA large subunit methyltransferase H, found in Anaeromyxobacter sp. (strain K).